A 22-amino-acid chain; its full sequence is Zinc finger protein 326 (22 aa).

A disordered region spans residues 1 to 22; that stretch reads QGYGFNEPEQTRNQGGSSWEAP. Residues 11–22 are compositionally biased toward polar residues; sequence TRNQGGSSWEAP.

It belongs to the AKAP95 family.

It localises to the nucleus matrix. Functionally, probable transcriptional activator which may play a role in neuronal differentiation. Able to bind DNA and activate expression in vitro. The protein is Zinc finger protein 326 (Znf326) of Rattus norvegicus (Rat).